Here is a 561-residue protein sequence, read N- to C-terminus: Arf-GAP domain and FG repeat-containing protein 1 (561 aa).

An Arf-GAP domain is found at 11-135 (EKHLKMLRDM…WYVPPEQAKV (125 aa)). The segment at 29 to 52 (CFDCDQRGPTYVNMTVGSFVCTSC) adopts a C4-type zinc-finger fold. Phosphoserine is present on S167. Residues 171–193 (LHLNKGTPTQSPVVGRSQGQQQE) are disordered. The span at 176 to 191 (GTPTQSPVVGRSQGQQ) shows a compositional bias: polar residues. Residue T177 is modified to Phosphothreonine. Phosphoserine is present on residues S181 and S362. The O-linked (GlcNAc) serine glycan is linked to S367. The disordered stretch occupies residues 409–451 (PVGASPQTQPASSGPAPFGATPSTNPFVAATGPSAASSTNPFQ). The span at 442-451 (SAASSTNPFQ) shows a compositional bias: polar residues.

In terms of assembly, interacts with EPS15R and EPS15. Interacts with FCHO1. O-glycosylated.

It is found in the nucleus. The protein resides in the cytoplasmic vesicle. Its function is as follows. Required for vesicle docking or fusion during acrosome biogenesis. May play a role in RNA trafficking or localization. The sequence is that of Arf-GAP domain and FG repeat-containing protein 1 (Agfg1) from Rattus norvegicus (Rat).